A 184-amino-acid polypeptide reads, in one-letter code: Ribosome-recycling factor (184 aa).

The interval 141–164 is disordered; the sequence is DEKNGDITEDDLRSQTEDVQKATD.

The protein belongs to the RRF family.

The protein resides in the cytoplasm. Functionally, responsible for the release of ribosomes from messenger RNA at the termination of protein biosynthesis. May increase the efficiency of translation by recycling ribosomes from one round of translation to another. This chain is Ribosome-recycling factor, found in Staphylococcus haemolyticus (strain JCSC1435).